The following is a 149-amino-acid chain: Large ribosomal subunit protein bL9 (149 aa).

It belongs to the bacterial ribosomal protein bL9 family.

Its function is as follows. Binds to the 23S rRNA. The chain is Large ribosomal subunit protein bL9 from Laribacter hongkongensis (strain HLHK9).